The primary structure comprises 490 residues: GTPase Der (490 aa).

EngA-type G domains are found at residues 3-166 (PVVA…MEDL) and 203-376 (IKLA…DSST). GTP-binding positions include 9 to 16 (GRPNVGKS), 56 to 60 (DTGGI), 118 to 121 (NKTD), 209 to 216 (GRPNVGKS), 256 to 260 (DTAGV), and 321 to 324 (NKWD). In terms of domain architecture, KH-like spans 377–461 (RRVGTSMLTR…PIRIQFKEGE (85 aa)).

Belongs to the TRAFAC class TrmE-Era-EngA-EngB-Septin-like GTPase superfamily. EngA (Der) GTPase family. As to quaternary structure, associates with the 50S ribosomal subunit.

Its function is as follows. GTPase that plays an essential role in the late steps of ribosome biogenesis. The protein is GTPase Der of Escherichia coli O7:K1 (strain IAI39 / ExPEC).